The sequence spans 372 residues: Pluviatolide O-methyltransferase (372 aa).

The S-adenosyl-L-homocysteine site is built by Gly-214, Asp-237, Asp-257, Met-258, and Lys-271. His-275 (proton acceptor) is an active-site residue. Active-site residues include Asp-306 and Glu-338.

It belongs to the class I-like SAM-binding methyltransferase superfamily. Cation-independent O-methyltransferase family. COMT subfamily. Homodimer. In terms of tissue distribution, mostly expressed in stems, and, to a lower extent, in leaves.

It carries out the reaction (-)-pluviatolide + S-adenosyl-L-methionine = (-)-bursehernin + S-adenosyl-L-homocysteine + H(+). It functions in the pathway aromatic compound metabolism; phenylpropanoid biosynthesis. Its function is as follows. O-methyltransferase involved in the biosynthesis of etoposide, a chemotherapeutic compound of the topoisomerase inhibitor family. Catalyzes the methylation of (-)-pluviatolide to produce (-)-bursehernin. The chain is Pluviatolide O-methyltransferase from Sinopodophyllum hexandrum (Himalayan may apple).